The chain runs to 493 residues: Poly(ribitol-phosphate) alpha-N-acetylglucosaminyltransferase (493 aa).

UDP-N-acetyl-alpha-D-glucosamine-binding positions include glycine 17, lysine 59, histidine 249, arginine 326, lysine 331, threonine 383, and 403 to 411 (EGQGLSMIE).

This sequence belongs to the glycosyltransferase group 1 family. In terms of assembly, homotrimer.

The protein resides in the cytoplasm. The catalysed reaction is 4-O-[(D-ribitylphospho)(n)-di{(2R)-glycerylphospho}]-N-acetyl-beta-D-mannosaminyl-(1-&gt;4)-N-acetyl-alpha-D-glucosaminyl di-trans,octa-cis-undecaprenyl diphosphate + n UDP-N-acetyl-alpha-D-glucosamine = 4-O-([2-N-acetyl-alpha-D-glucosaminyl-1-D-ribitylphospho](n)-di{[2R]-1-glycerylphospho})-N-acetyl-beta-D-mannosaminyl-(1-&gt;4)-N-acetyl-alpha-D-glucosaminyl di-trans,octa-cis-undecaprenyl diphosphate + n UDP + n H(+). It functions in the pathway cell wall biogenesis; poly(ribitol phosphate) teichoic acid biosynthesis. In terms of biological role, attaches N-acetyl-alpha-D-glucosamine residues to poly(RboP)-wall teichoic acids (WTAs). The chain is Poly(ribitol-phosphate) alpha-N-acetylglucosaminyltransferase from Staphylococcus aureus (strain COL).